Reading from the N-terminus, the 332-residue chain is Protein pbn1 (332 aa).

At 1–301 (MDLQRTNQDT…SIPIADLSYK (301 aa)) the chain is on the lumenal side. Residues Asn-36, Asn-56, Asn-112, and Asn-206 are each glycosylated (N-linked (GlcNAc...) asparagine). Residues 302-324 (HVVEWVTNGVAIFSFFYLLLYLW) form a helical membrane-spanning segment. The Cytoplasmic segment spans residues 325–332 (KRFRYAKD).

The protein belongs to the PIGX family.

It localises to the endoplasmic reticulum membrane. The protein operates within glycolipid biosynthesis; glycosylphosphatidylinositol-anchor biosynthesis. Required for proper folding and/or the stability of a subset of proteins in the endoplasmic reticulum. Component of glycosylphosphatidylinositol-mannosyltransferase 1 which transfers the first of the 4 mannoses in the GPI-anchor precursors during GPI-anchor biosynthesis. Probably acts by stabilizing the mannosyltransferase gpi14. The chain is Protein pbn1 (pbn1) from Schizosaccharomyces pombe (strain 972 / ATCC 24843) (Fission yeast).